The sequence spans 293 residues: 4-hydroxy-tetrahydrodipicolinate synthase (293 aa).

Threonine 46 contacts pyruvate. Catalysis depends on tyrosine 133, which acts as the Proton donor/acceptor. The active-site Schiff-base intermediate with substrate is the lysine 161. Valine 202 is a binding site for pyruvate.

The protein belongs to the DapA family. As to quaternary structure, homotetramer; dimer of dimers.

The protein localises to the cytoplasm. It carries out the reaction L-aspartate 4-semialdehyde + pyruvate = (2S,4S)-4-hydroxy-2,3,4,5-tetrahydrodipicolinate + H2O + H(+). Its pathway is amino-acid biosynthesis; L-lysine biosynthesis via DAP pathway; (S)-tetrahydrodipicolinate from L-aspartate: step 3/4. Catalyzes the condensation of (S)-aspartate-beta-semialdehyde [(S)-ASA] and pyruvate to 4-hydroxy-tetrahydrodipicolinate (HTPA). The chain is 4-hydroxy-tetrahydrodipicolinate synthase from Wolbachia pipientis wMel.